A 94-amino-acid chain; its full sequence is Small ribosomal subunit protein bS6 (94 aa).

It belongs to the bacterial ribosomal protein bS6 family.

Its function is as follows. Binds together with bS18 to 16S ribosomal RNA. The protein is Small ribosomal subunit protein bS6 of Alkaliphilus oremlandii (strain OhILAs) (Clostridium oremlandii (strain OhILAs)).